The chain runs to 178 residues: uncharacterized protein (178 aa).

A signal peptide spans 1-19 (MKKNIHILGASGVGTSTLG).

This is an uncharacterized protein from Bacillus subtilis (strain 168).